The sequence spans 437 residues: UDP-glucuronate 4-epimerase 4 (437 aa).

A helical transmembrane segment spans residues 30-50 (SLTKFAFFSFFLLCLISLLFL). The tract at residues 56-76 (INPSSPSDPSRRSLRTNTYGG) is disordered. The chain crosses the membrane as a helical span at residues 96 to 116 (GITVLVTGAAGFVGTHVSAAL). Residue 98–129 (TVLVTGAAGFVGTHVSAALKRRGDGVIGLDNF) participates in NAD(+) binding. The Proton acceptor role is filled by tyrosine 248.

Belongs to the NAD(P)-dependent epimerase/dehydratase family. Homodimer. In roots, leaves, siliques, flowers, pollen and stems.

The protein localises to the golgi apparatus. Its subcellular location is the golgi stack membrane. It carries out the reaction UDP-alpha-D-glucuronate = UDP-alpha-D-galacturonate. Its activity is regulated as follows. Activated by glycerol, not effected by dimethyl sulfoxide and inhibited by high concentration of monovalent salts, UDP-xylose, UDP-arabinose or UDP. Its function is as follows. Involved in the synthesis of the negatively charged monosaccharide that forms the backbone of pectic cell wall components. The polypeptide is UDP-glucuronate 4-epimerase 4 (GAE4) (Arabidopsis thaliana (Mouse-ear cress)).